A 299-amino-acid chain; its full sequence is Non-structural protein NS-S (299 aa).

The involved in inclusion bodies formation stretch occupies residues 66–69; sequence PNNP. The segment at 148–220 is interaction with host TNIP2; sequence FEGDMVIDSC…KPLLDSLYFA (73 aa).

Belongs to the Bandavirus NS-S protein family. Interacts with host TBK1; this interaction antagonizes TBK1 phosphorylation and inhibits TBK1-IRF3 interaction. Interacts with host STAT2; this interaction blocks the nuclear translocation and activation of host STAT2. Interacts with host TNIP2.

The protein localises to the host cytoplasm. Plays a role in the inhibition of host RLR-induced interferon-beta activation by inhibiting the phosphorylation of TANK-binding kinase 1/TBK1, thereby blocking IRF3 activation and preventing the establishment of an antiviral state. Also blocks IFN-triggered nuclear translocation and activation of host STAT2. The chain is Non-structural protein NS-S (NSS) from Alces americanus (American moose).